A 194-amino-acid polypeptide reads, in one-letter code: Orotate phosphoribosyltransferase (194 aa).

A 5-phospho-alpha-D-ribose 1-diphosphate-binding site is contributed by 114–122; it reads EDVVTTGKS. The orotate site is built by Thr118 and Arg146.

It belongs to the purine/pyrimidine phosphoribosyltransferase family. PyrE subfamily. Homodimer. The cofactor is Mg(2+).

It catalyses the reaction orotidine 5'-phosphate + diphosphate = orotate + 5-phospho-alpha-D-ribose 1-diphosphate. The protein operates within pyrimidine metabolism; UMP biosynthesis via de novo pathway; UMP from orotate: step 1/2. Functionally, catalyzes the transfer of a ribosyl phosphate group from 5-phosphoribose 1-diphosphate to orotate, leading to the formation of orotidine monophosphate (OMP). The protein is Orotate phosphoribosyltransferase of Clostridioides difficile (strain 630) (Peptoclostridium difficile).